The following is a 98-amino-acid chain: MNQERVFKVLLGPHMTEKAAFAAENNQYVFKVAQDATKPEIKKAVEALFEKKVAGVQVLNVKGKTKRTQHGLGLRKGYRKAYVTLAAGETLEDFSGAE.

Belongs to the universal ribosomal protein uL23 family. Part of the 50S ribosomal subunit. Contacts protein L29, and trigger factor when it is bound to the ribosome.

Functionally, one of the early assembly proteins it binds 23S rRNA. One of the proteins that surrounds the polypeptide exit tunnel on the outside of the ribosome. Forms the main docking site for trigger factor binding to the ribosome. In Chromohalobacter salexigens (strain ATCC BAA-138 / DSM 3043 / CIP 106854 / NCIMB 13768 / 1H11), this protein is Large ribosomal subunit protein uL23.